Consider the following 238-residue polypeptide: Aspartate/glutamate leucyltransferase (238 aa).

The protein belongs to the R-transferase family. Bpt subfamily.

It localises to the cytoplasm. The enzyme catalyses N-terminal L-glutamyl-[protein] + L-leucyl-tRNA(Leu) = N-terminal L-leucyl-L-glutamyl-[protein] + tRNA(Leu) + H(+). It carries out the reaction N-terminal L-aspartyl-[protein] + L-leucyl-tRNA(Leu) = N-terminal L-leucyl-L-aspartyl-[protein] + tRNA(Leu) + H(+). Its function is as follows. Functions in the N-end rule pathway of protein degradation where it conjugates Leu from its aminoacyl-tRNA to the N-termini of proteins containing an N-terminal aspartate or glutamate. This chain is Aspartate/glutamate leucyltransferase, found in Shewanella sp. (strain ANA-3).